A 221-amino-acid chain; its full sequence is Aspartic protease inhibitor 1 (221 aa).

A signal peptide spans 1-23; that stretch reads MMKCLFFLCLCLFPILVFSSTFT. The propeptide occupies 24-32; it reads SQNPINLPS. A Vacuolar targeting signal motif is present at residues 26-31; the sequence is NPINLP. Asn51 carries N-linked (GlcNAc...) asparagine glycosylation. 2 disulfides stabilise this stretch: Cys80–Cys125 and Cys174–Cys186.

It belongs to the protease inhibitor I3 (leguminous Kunitz-type inhibitor) family. As to expression, tubers, young leaves and flower bud. Not detected in root, stem or mature leaves.

It localises to the vacuole. Its function is as follows. Inhibitor of cathepsin D (aspartic protease). May also inhibit trypsin and chymotrypsin (serine proteases). Protects the plant by inhibiting proteases of invading organisms. The polypeptide is Aspartic protease inhibitor 1 (Solanum tuberosum (Potato)).